The sequence spans 137 residues: ATP synthase epsilon chain (137 aa).

It belongs to the ATPase epsilon chain family. F-type ATPases have 2 components, CF(1) - the catalytic core - and CF(0) - the membrane proton channel. CF(1) has five subunits: alpha(3), beta(3), gamma(1), delta(1), epsilon(1). CF(0) has three main subunits: a, b and c.

The protein resides in the cell membrane. In terms of biological role, produces ATP from ADP in the presence of a proton gradient across the membrane. The chain is ATP synthase epsilon chain from Mycoplasmopsis synoviae (strain 53) (Mycoplasma synoviae).